The sequence spans 300 residues: uncharacterized protein (300 aa).

Disordered regions lie at residues Asp-167–His-186 and Ala-224–His-244. Residues Ala-224 to Ser-236 show a composition bias toward polar residues.

This is an uncharacterized protein from Rattus norvegicus (Rat).